The chain runs to 155 residues: Small ribosomal subunit protein eS19B (155 aa).

The protein belongs to the eukaryotic ribosomal protein eS19 family.

This chain is Small ribosomal subunit protein eS19B (RpS19b), found in Drosophila melanogaster (Fruit fly).